A 67-amino-acid chain; its full sequence is Small ribosomal subunit protein bS21 (67 aa).

It belongs to the bacterial ribosomal protein bS21 family.

In Paramagnetospirillum magneticum (strain ATCC 700264 / AMB-1) (Magnetospirillum magneticum), this protein is Small ribosomal subunit protein bS21.